Here is a 172-residue protein sequence, read N- to C-terminus: Methylated-DNA--protein-cysteine methyltransferase (172 aa).

Residue Cys142 is the Nucleophile; methyl group acceptor of the active site.

Belongs to the MGMT family.

It localises to the cytoplasm. It carries out the reaction a 6-O-methyl-2'-deoxyguanosine in DNA + L-cysteinyl-[protein] = S-methyl-L-cysteinyl-[protein] + a 2'-deoxyguanosine in DNA. The enzyme catalyses a 4-O-methyl-thymidine in DNA + L-cysteinyl-[protein] = a thymidine in DNA + S-methyl-L-cysteinyl-[protein]. In terms of biological role, involved in the cellular defense against the biological effects of O6-methylguanine (O6-MeG) and O4-methylthymine (O4-MeT) in DNA. Repairs the methylated nucleobase in DNA by stoichiometrically transferring the methyl group to a cysteine residue in the enzyme. This is a suicide reaction: the enzyme is irreversibly inactivated. This Pyrococcus abyssi (strain GE5 / Orsay) protein is Methylated-DNA--protein-cysteine methyltransferase.